The chain runs to 421 residues: 4-hydroxy-3-methylbut-2-en-1-yl diphosphate synthase (flavodoxin) (421 aa).

The disordered stretch occupies residues 1–20 (MHDAVTRPTPPSDATSWPRR). The [4Fe-4S] cluster site is built by Cys-311, Cys-314, Cys-357, and Glu-364.

The protein belongs to the IspG family. It depends on [4Fe-4S] cluster as a cofactor.

The enzyme catalyses (2E)-4-hydroxy-3-methylbut-2-enyl diphosphate + oxidized [flavodoxin] + H2O + 2 H(+) = 2-C-methyl-D-erythritol 2,4-cyclic diphosphate + reduced [flavodoxin]. The protein operates within isoprenoid biosynthesis; isopentenyl diphosphate biosynthesis via DXP pathway; isopentenyl diphosphate from 1-deoxy-D-xylulose 5-phosphate: step 5/6. Functionally, converts 2C-methyl-D-erythritol 2,4-cyclodiphosphate (ME-2,4cPP) into 1-hydroxy-2-methyl-2-(E)-butenyl 4-diphosphate. The sequence is that of 4-hydroxy-3-methylbut-2-en-1-yl diphosphate synthase (flavodoxin) from Stenotrophomonas maltophilia (strain R551-3).